The following is a 179-amino-acid chain: uncharacterized protein (179 aa).

The N-terminal stretch at 1 to 19 (MNTNVFRLLLLGSLFSLSA) is a signal peptide. Cys-20 carries N-palmitoyl cysteine lipidation. A lipid anchor (S-diacylglycerol cysteine) is attached at Cys-20.

It is found in the cell membrane. This is an uncharacterized protein from Escherichia coli (strain K12).